The primary structure comprises 345 residues: MNYKLFSPYTIKDVTLKNRIVMSPMCMYSSKNEDGQITNFHLIHYGTRAAGQVGLVMIEATAVLPEGRISNKDLGIWDDSLIEGLHKATTFIHDNGAKAAIQLAHAGRKAELETDALAPSAIPFNETMKMPIEMSKHQIKDTVLAFQQAAVRSKQAGFDVIEIHGAHGYLINEFLSPLTNKRTDEYGGSPENRYRFLREIIESINEVWNGPLFVRISANDYHPDGLTVQDYVQYTKWMKEQGVDLIDCSSGAVVPARIDVYPGYQVQYAKHIKEHANIATGAVGLITTGAQAEQILNNNEADLIFIGRELLRNPYFSRIAANELGFELEEPYQYERAPGKISTNK.

Residue 23 to 26 (SPMC) coordinates FMN. Tyr-28 lines the substrate pocket. FMN is bound by residues Ala-60 and Gln-102. 164-167 (HGAH) serves as a coordination point for substrate. FMN is bound by residues Arg-215 and 307 to 308 (GR).

This sequence belongs to the NADH:flavin oxidoreductase/NADH oxidase family. NamA subfamily. As to quaternary structure, homotetramer. Requires FMN as cofactor.

The enzyme catalyses A + NADPH + H(+) = AH2 + NADP(+). Functionally, catalyzes the reduction of the double bond of an array of alpha,beta-unsaturated aldehydes and ketones. It also reduces the nitro group of nitroester and nitroaromatic compounds. It could have a role in detoxification processes. This chain is NADPH dehydrogenase, found in Bacillus cereus (strain AH187).